The sequence spans 98 residues: Cystatin-A (98 aa).

An N-acetylmethionine modification is found at Met1. The Secondary area of contact signature appears at 46 to 50 (QVVAG).

Belongs to the cystatin family. As to expression, expressed in the skin throughout the epidermis.

The protein localises to the cytoplasm. Functionally, this is an intracellular thiol proteinase inhibitor. Has an important role in desmosome-mediated cell-cell adhesion in the lower levels of the epidermis. In Homo sapiens (Human), this protein is Cystatin-A (CSTA).